A 479-amino-acid polypeptide reads, in one-letter code: MFRRCFPIFNPYDVVVVGGGPGGYVAAIKAAQLGLKTACVEKRGALGGTCLNVGCIPSKALLHATHMYHDAHANFERYGLMGGAGVTMDVAKMQQQKEKSVNGLTSGVEYLLKKNKVTYYKGEAGFVTPNTLNVKGIDGKDEAIEAKNTIIATGSEPTALPFLPFDEKVVLSSTGALALQQVPKKMVVIGGGVIGLELGSVWARLGSDVTVVEFAPRCAPTLDSDVTDALVGALKRNGEDEVPMTGIEGVNGTNNGSIALTLEVEQAGGQAETLHCDALLVSVGRRPYTAGLGLEKNNVSLNERGFVKIGSHFETNVAGVYAIGDVVDKGPMLAHKAEDEGVACAEILAGRPGHVNYDVIPGVIYTMPEVASVGKTEEELKKAGVAYKVGKFPFNANSRAKAVATEDGFVKVLTDKATDRILGVHIVCSAAGELIAGALLAMEYGASSEDVGRTCHAHPTMSEAVKEACMACFAKTINF.

FAD contacts are provided by residues 41–50, Lys-59, Ala-124, and 153–155; these read EKRGALGGTC and TGS. A disulfide bridge links Cys-50 with Cys-55. NAD(+) contacts are provided by residues 190-197, Glu-213, Ile-247, and Gly-284; that span reads GGGVIGLE. FAD-binding positions include Asp-325 and 332–335; that span reads MLAH. His-458 functions as the Proton acceptor in the catalytic mechanism.

It belongs to the class-I pyridine nucleotide-disulfide oxidoreductase family. In terms of assembly, homodimer. It depends on FAD as a cofactor.

The catalysed reaction is N(6)-[(R)-dihydrolipoyl]-L-lysyl-[protein] + NAD(+) = N(6)-[(R)-lipoyl]-L-lysyl-[protein] + NADH + H(+). This is Dihydrolipoyl dehydrogenase from Trypanosoma brucei brucei.